A 328-amino-acid polypeptide reads, in one-letter code: Tetraacyldisaccharide 4'-kinase (328 aa).

55–62 (TAGGNGKT) provides a ligand contact to ATP.

It belongs to the LpxK family.

The catalysed reaction is a lipid A disaccharide + ATP = a lipid IVA + ADP + H(+). It functions in the pathway glycolipid biosynthesis; lipid IV(A) biosynthesis; lipid IV(A) from (3R)-3-hydroxytetradecanoyl-[acyl-carrier-protein] and UDP-N-acetyl-alpha-D-glucosamine: step 6/6. Functionally, transfers the gamma-phosphate of ATP to the 4'-position of a tetraacyldisaccharide 1-phosphate intermediate (termed DS-1-P) to form tetraacyldisaccharide 1,4'-bis-phosphate (lipid IVA). The sequence is that of Tetraacyldisaccharide 4'-kinase from Escherichia coli O6:K15:H31 (strain 536 / UPEC).